Here is a 92-residue protein sequence, read N- to C-terminus: RNA-binding protein Hfq (92 aa).

Residues 9–68 (DPFLNALRRERVPVSVYLVNGIKLQGTIESFDQFVVLLRNTVSQMVYKHAISTVVPARNV) form the Sm domain. The interval 73 to 92 (GGGYVQSNEGNQAEDDDVEQ) is disordered.

The protein belongs to the Hfq family. As to quaternary structure, homohexamer.

RNA chaperone that binds small regulatory RNA (sRNAs) and mRNAs to facilitate mRNA translational regulation in response to envelope stress, environmental stress and changes in metabolite concentrations. Also binds with high specificity to tRNAs. The protein is RNA-binding protein Hfq of Xanthomonas axonopodis pv. citri (strain 306).